The sequence spans 234 residues: uncharacterized protein (234 aa).

Positions 1 to 12 (MGSSSSSSLNNS) are enriched in low complexity. The segment at 1 to 184 (MGSSSSSSLN…TPYLSGANSR (184 aa)) is disordered. Composition is skewed to polar residues over residues 21-40 (TPESQMTVNDNKNDNVSILS) and 52-64 (KSTSIPANNNLTP). Residues 66 to 77 (KSRWSFSSSKKS) show a composition bias toward low complexity. The segment covering 105–120 (GDFTPSLGNTPKSSFS) has biased composition (polar residues). Residues 152–167 (LGELFRDSIREEREES) are compositionally biased toward basic and acidic residues.

As to quaternary structure, interacts with RLK902. As to expression, expressed in stems, rosette leaves and roots and weakly in inflorescences.

This is an uncharacterized protein from Arabidopsis thaliana (Mouse-ear cress).